Reading from the N-terminus, the 114-residue chain is NAD(P)H-quinone oxidoreductase subunit M (114 aa).

The protein belongs to the complex I NdhM subunit family. In terms of assembly, NDH-1 can be composed of about 15 different subunits; different subcomplexes with different compositions have been identified which probably have different functions.

The protein resides in the cellular thylakoid membrane. The enzyme catalyses a plastoquinone + NADH + (n+1) H(+)(in) = a plastoquinol + NAD(+) + n H(+)(out). It catalyses the reaction a plastoquinone + NADPH + (n+1) H(+)(in) = a plastoquinol + NADP(+) + n H(+)(out). In terms of biological role, NDH-1 shuttles electrons from an unknown electron donor, via FMN and iron-sulfur (Fe-S) centers, to quinones in the respiratory and/or the photosynthetic chain. The immediate electron acceptor for the enzyme in this species is believed to be plastoquinone. Couples the redox reaction to proton translocation, and thus conserves the redox energy in a proton gradient. Cyanobacterial NDH-1 also plays a role in inorganic carbon-concentration. This Acaryochloris marina (strain MBIC 11017) protein is NAD(P)H-quinone oxidoreductase subunit M.